Consider the following 136-residue polypeptide: ATP synthase epsilon chain, plastid (136 aa).

It belongs to the ATPase epsilon chain family. As to quaternary structure, F-type ATPases have 2 components, CF(1) - the catalytic core - and CF(0) - the membrane proton channel. CF(1) has five subunits: alpha(3), beta(3), gamma(1), delta(1), epsilon(1). CF(0) has three main subunits: a, b and c.

Its subcellular location is the plastid thylakoid membrane. Produces ATP from ADP in the presence of a proton gradient across the membrane. This is ATP synthase epsilon chain, plastid from Cuscuta reflexa (Southern Asian dodder).